The sequence spans 75 residues: Protein P8 (75 aa).

Residues Pro-19–Gly-47 form a disordered region. Residues Ile-26–Gln-39 are compositionally biased toward polar residues. A helical transmembrane segment spans residues Asn-55–Ile-72.

It is found in the virion membrane. The sequence is that of Protein P8 (VIII) from Pseudoalteromonas phage PM2 (Bacteriophage PM2).